A 384-amino-acid polypeptide reads, in one-letter code: UPF0284 protein alr0297 (384 aa).

It belongs to the UPF0284 family.

In Nostoc sp. (strain PCC 7120 / SAG 25.82 / UTEX 2576), this protein is UPF0284 protein alr0297.